The sequence spans 366 residues: Protein sigma-NS (366 aa).

The interval 1–11 (MASSLRAAISK) is important for ssRNA-binding and formation of complexes.

The protein belongs to the orthoreovirus sigma-NS protein family. In terms of assembly, homooligomer; in presence of RNA. Interacts with protein mu-NS; this interaction allows the localization of sigma-NS to the viral factories. Interacts with host G3BP1 (via C-terminus); this interaction induces the relocalization of G3BP1 and other SG proteins to the viral factories periphery.

It is found in the host cytoplasm. Its function is as follows. Protein that binds to ssRNA and participates with protein mu-NS in forming the matrix of viral factories, which are large inclusions in the host cytoplasm where replication intermediates are assembled and viral RNA replication takes place. Plays a role in the inhibition of the integrated stress response (ISR) to escape from host cell translational shutoff. Participates in the disruption of stress granules (SG) through its association with host G3BP1 and mu-NS. In Mammalia (T1L), this protein is Protein sigma-NS (S3).